Reading from the N-terminus, the 119-residue chain is Holo-[acyl-carrier-protein] synthase (119 aa).

Mg(2+) contacts are provided by Asp-8 and Glu-58.

This sequence belongs to the P-Pant transferase superfamily. AcpS family. Requires Mg(2+) as cofactor.

The protein resides in the cytoplasm. The catalysed reaction is apo-[ACP] + CoA = holo-[ACP] + adenosine 3',5'-bisphosphate + H(+). In terms of biological role, transfers the 4'-phosphopantetheine moiety from coenzyme A to a Ser of acyl-carrier-protein. The sequence is that of Holo-[acyl-carrier-protein] synthase from Bacillus cytotoxicus (strain DSM 22905 / CIP 110041 / 391-98 / NVH 391-98).